The following is a 23-amino-acid chain: Laccase-1 (23 aa).

The protein belongs to the multicopper oxidase family. The cofactor is Cu cation.

It localises to the secreted. The enzyme catalyses 4 hydroquinone + O2 = 4 benzosemiquinone + 2 H2O. Strongly inhibited by sodium azide, sodium cyanide, Li(+), Sn(+), Hg(2+), and the disulfide-reducing agents beta-mercaptoethanol, dithiothreitol and thioglycolic acid. Moderately inhibited by Mn(2+) and Fe(2+), inhibition by these metal ions is stronger at 0.1 mM than at 1 mM. Moderately inhibited by Cu(2+). Lignin degradation and detoxification of lignin-derived products. Demethylates eucalyptus hard wood lignin. Has high activity against the non-phenolic heterocyclic compound ABTS, and lower activity against the phenolic substrates syringic acid, caffeic acid, syringaldazine, vanillic acid, catechol and levodihydroxyphenylalanine. The protein is Laccase-1 of Galerina sp.